The chain runs to 226 residues: uncharacterized protein (226 aa).

This is an uncharacterized protein from Caenorhabditis elegans.